The chain runs to 175 residues: NADH-quinone oxidoreductase subunit I (175 aa).

4Fe-4S ferredoxin-type domains follow at residues 44-74 (LNRY…VEGA) and 90-119 (RVYQ…MTND). The [4Fe-4S] cluster site is built by cysteine 54, cysteine 57, cysteine 60, cysteine 64, cysteine 99, cysteine 102, cysteine 105, and cysteine 109. Residues 148–175 (PPHAMAPGATDEDYYRGTVSPSAEADAR) are disordered.

The protein belongs to the complex I 23 kDa subunit family. NDH-1 is composed of 14 different subunits. Subunits NuoA, H, J, K, L, M, N constitute the membrane sector of the complex. [4Fe-4S] cluster serves as cofactor.

It localises to the cell membrane. It catalyses the reaction a quinone + NADH + 5 H(+)(in) = a quinol + NAD(+) + 4 H(+)(out). Its function is as follows. NDH-1 shuttles electrons from NADH, via FMN and iron-sulfur (Fe-S) centers, to quinones in the respiratory chain. The immediate electron acceptor for the enzyme in this species is believed to be menaquinone. Couples the redox reaction to proton translocation (for every two electrons transferred, four hydrogen ions are translocated across the cytoplasmic membrane), and thus conserves the redox energy in a proton gradient. This is NADH-quinone oxidoreductase subunit I from Mycolicibacterium gilvum (strain PYR-GCK) (Mycobacterium gilvum (strain PYR-GCK)).